The sequence spans 601 residues: DDB1- and CUL4-associated factor 8 (601 aa).

Polar residues-rich tracts occupy residues 1-24 (MSFS…SSPE) and 46-60 (VSLS…TTQA). The disordered stretch occupies residues 1 to 150 (MSFSGEMSNG…DWLISEKTPL (150 aa)). The Nuclear export signal signature appears at 39–50 (IEVEASDVSLSL). A compositionally biased stretch (basic and acidic residues) spans 61–99 (ESRDSCSETSGEDKDSDSMDDTGHYSINDENRGNDQSHS). Positions 94-131 (NDQSHSEDEEEEEEEDEEEEAVRHRKRAQRKRANRDQE) form a coiled coil. Residues 100–113 (EDEEEEEEEDEEEE) are compositionally biased toward acidic residues. The segment covering 116 to 126 (RHRKRAQRKRA) has biased composition (basic residues). Residues 127-140 (NRDQESSDEERALD) are compositionally biased toward basic and acidic residues. WD repeat units follow at residues 194 to 233 (GHSG…PVLE), 237 to 278 (GHKS…CCKN), 284 to 324 (QHKG…PASR), 332 to 372 (ESKV…ENVN), 388 to 427 (EAKA…GAEY), 435 to 475 (RNNA…IVQF), and 479 to 519 (DKGG…TELD). A disordered region spans residues 561-601 (RRRRRDAGLGAGDAESDDSPSSSDSSDDDEDGPDRVQCIPS).

It belongs to the WD repeat DCAF8 family.

It is found in the nucleus. The protein resides in the cytoplasm. The sequence is that of DDB1- and CUL4-associated factor 8 (dcaf8) from Xenopus laevis (African clawed frog).